Consider the following 130-residue polypeptide: Large ribosomal subunit protein bL19 (130 aa).

The protein belongs to the bacterial ribosomal protein bL19 family.

In terms of biological role, this protein is located at the 30S-50S ribosomal subunit interface and may play a role in the structure and function of the aminoacyl-tRNA binding site. The protein is Large ribosomal subunit protein bL19 of Burkholderia orbicola (strain MC0-3).